Reading from the N-terminus, the 471-residue chain is Trigger factor (471 aa).

The region spanning aspartate 166–proline 245 is the PPIase FKBP-type domain. The tract at residues alanine 442–phenylalanine 471 is disordered. Over residues glycine 447–glutamate 456 the composition is skewed to acidic residues.

This sequence belongs to the FKBP-type PPIase family. Tig subfamily.

It is found in the cytoplasm. The catalysed reaction is [protein]-peptidylproline (omega=180) = [protein]-peptidylproline (omega=0). Its function is as follows. Involved in protein export. Acts as a chaperone by maintaining the newly synthesized protein in an open conformation. Functions as a peptidyl-prolyl cis-trans isomerase. This chain is Trigger factor, found in Renibacterium salmoninarum (strain ATCC 33209 / DSM 20767 / JCM 11484 / NBRC 15589 / NCIMB 2235).